Consider the following 91-residue polypeptide: Sec-independent protein translocase protein TatA (91 aa).

The helical transmembrane segment at 1–21 threads the bilayer; sequence MGIFDWKHWIVILIVVVLVFG. The disordered stretch occupies residues 42–91; sequence AMHDDDKPAEQPAPQPQQAQPAPQGSPLNQPHTIDAQAHKVDEPIRKDQV. Residues 51 to 64 are compositionally biased toward low complexity; sequence EQPAPQPQQAQPAP. The segment covering 78 to 91 has biased composition (basic and acidic residues); it reads QAHKVDEPIRKDQV.

This sequence belongs to the TatA/E family. The Tat system comprises two distinct complexes: a TatABC complex, containing multiple copies of TatA, TatB and TatC subunits, and a separate TatA complex, containing only TatA subunits. Substrates initially bind to the TatABC complex, which probably triggers association of the separate TatA complex to form the active translocon.

Its subcellular location is the cell inner membrane. Functionally, part of the twin-arginine translocation (Tat) system that transports large folded proteins containing a characteristic twin-arginine motif in their signal peptide across membranes. TatA could form the protein-conducting channel of the Tat system. The chain is Sec-independent protein translocase protein TatA from Pseudomonas syringae pv. tomato (strain ATCC BAA-871 / DC3000).